The primary structure comprises 632 residues: Phosphomethylpyrimidine synthase (632 aa).

The span at 1–23 (MNIRSNPQQTVPAVTTGPLSSSR) shows a compositional bias: polar residues. A disordered region spans residues 1–26 (MNIRSNPQQTVPAVTTGPLSSSRKIF). Residues asparagine 221, methionine 250, tyrosine 279, histidine 315, 335 to 337 (SRG), 376 to 379 (DGLR), and glutamate 415 contribute to the substrate site. Histidine 419 is a binding site for Zn(2+). Tyrosine 442 provides a ligand contact to substrate. Histidine 483 contacts Zn(2+). The [4Fe-4S] cluster site is built by cysteine 563, cysteine 566, and cysteine 571.

It belongs to the ThiC family. Homodimer. [4Fe-4S] cluster serves as cofactor.

The catalysed reaction is 5-amino-1-(5-phospho-beta-D-ribosyl)imidazole + S-adenosyl-L-methionine = 4-amino-2-methyl-5-(phosphooxymethyl)pyrimidine + CO + 5'-deoxyadenosine + formate + L-methionine + 3 H(+). It functions in the pathway cofactor biosynthesis; thiamine diphosphate biosynthesis. In terms of biological role, catalyzes the synthesis of the hydroxymethylpyrimidine phosphate (HMP-P) moiety of thiamine from aminoimidazole ribotide (AIR) in a radical S-adenosyl-L-methionine (SAM)-dependent reaction. The protein is Phosphomethylpyrimidine synthase of Bradyrhizobium diazoefficiens (strain JCM 10833 / BCRC 13528 / IAM 13628 / NBRC 14792 / USDA 110).